We begin with the raw amino-acid sequence, 586 residues long: MAAPGSEKSSKKKTEKKLAAREEAKLLAGFMGVMNSMRKQRTLCDVILMVQERRIPAHRVVLASASHFFNLMFTTNMLESKSFEVELKDAEPDIIEQLVEFAYTARISVNSNNVQSLLDAANQYQIEPVKKMCVDFLKEQVDASNCLGISVLAECLDCPELKATADDFIHQHFTEVYKTDEFLQLDVKRVTHLLNQDTLTVRAEDQVYDAAVRWLKYDEPNRQPYMVDILAKVRFPLISKNFLSKTVQAEPLIQDNPECLKMVISGMRYHLLSPEDREELVEGTRPRRKKHDYRIALFGGSQPQSCRYFNPKDYSWTDIRCPFEKRRDAACVFWDNVVYILGGSQLFPIKRMDCYNVVKDSWYSKLGPPTPRDSLAACAAEGKIYTSGGSEVGNSALYLFECYDTRTESWHTKPSMLTQRCSHGMVEANGLIYVCGGSLGNNVSRRVLNSCEVYDPATETWTELCPMIEARKNHGLVFVKDKIFAVGGQNGLGGLDNVEYYDIKMNEWKMVSPMPWKGVTVKCAAVGSIVYVLAGFQGVGRLGHILEYNTETDKWIANSKVRAFPVTSCLICVVDTCGANEETLET.

A BTB domain is found at 44–111 (CDVILMVQER…AYTARISVNS (68 aa)). The BACK domain maps to 146-248 (CLGISVLAEC…SKNFLSKTVQ (103 aa)). Kelch repeat units follow at residues 294 to 336 (RIAL…FWDN), 337 to 382 (VVYI…AAEG), 383 to 430 (KIYT…EANG), 431 to 481 (LIYV…FVKD), 483 to 528 (IFAV…AVGS), and 530 to 575 (VYVL…CVVD).

As to quaternary structure, homodimer. Component of the BCR(KLHL7) E3 ubiquitin ligase complex.

The protein resides in the nucleus. It is found in the cytoplasm. It functions in the pathway protein modification; protein ubiquitination. In terms of biological role, substrate-specific adapter of a BCR (BTB-CUL3-RBX1) E3 ubiquitin ligase complex. The BCR(KLHL7) complex acts by mediating ubiquitination and subsequent degradation of substrate proteins. Probably mediates 'Lys-48'-linked ubiquitination. In Gallus gallus (Chicken), this protein is Kelch-like protein 7 (KLHL7).